Reading from the N-terminus, the 416-residue chain is Phosphoglycerate kinase (416 aa).

Substrate is bound by residues 24-26, Arg40, 63-66, Arg126, and Arg166; these read DLN and HLGR. Residues Lys216, Gly304, Glu335, and 364 to 367 each bind ATP; that span reads GGDS.

This sequence belongs to the phosphoglycerate kinase family. Monomer.

The protein localises to the cytoplasm. It catalyses the reaction (2R)-3-phosphoglycerate + ATP = (2R)-3-phospho-glyceroyl phosphate + ADP. Its pathway is carbohydrate degradation; glycolysis; pyruvate from D-glyceraldehyde 3-phosphate: step 2/5. This chain is Phosphoglycerate kinase, found in Mycobacterium leprae (strain Br4923).